A 254-amino-acid polypeptide reads, in one-letter code: CRISPR-associated endoribonuclease Cas6 1 (254 aa).

Tyrosine 32 acts as the Proton acceptor in catalysis. The Proton donor role is filled by histidine 47.

It belongs to the CRISPR-associated protein Cas6/Cse3/CasE family.

CRISPR (clustered regularly interspaced short palindromic repeat) is an adaptive immune system that provides protection against mobile genetic elements (viruses, transposable elements and conjugative plasmids). CRISPR clusters contain sequences complementary to antecedent mobile elements and target invading nucleic acids. CRISPR clusters are transcribed and processed into CRISPR RNA (crRNA). This protein processes pre-crRNA into individual crRNA units. The chain is CRISPR-associated endoribonuclease Cas6 1 (cas6a) from Methanocaldococcus jannaschii (strain ATCC 43067 / DSM 2661 / JAL-1 / JCM 10045 / NBRC 100440) (Methanococcus jannaschii).